Reading from the N-terminus, the 132-residue chain is Histone H2A.1 (132 aa).

Positions 1 to 21 are disordered; sequence MSGGKGKAGTSEKASTSRSAK. Ser-2 is modified (N-acetylserine). 2 positions are modified to N6-acetyllysine: Lys-5 and Lys-7. Gln-105 carries the post-translational modification N5-methylglutamine. Ser-129 is modified (phosphoserine). The [ST]-Q motif signature appears at 129–130; that stretch reads SQ.

The protein belongs to the histone H2A family. The nucleosome is a histone octamer containing two molecules each of H2A, H2B, H3 and H4 assembled in one H3-H4 heterotetramer and two H2A-H2B heterodimers. The octamer wraps approximately 147 bp of DNA. Phosphorylated to form H2AS128ph (gamma-H2A) in response to DNA double-strand breaks (DSBs) generated by exogenous genotoxic agents and by stalled replication forks. Phosphorylation is dependent on the DNA damage checkpoint kinases MEC1/ATR and TEL1/ATM, spreads on either side of a detected DSB site and may mark the surrounding chromatin for recruitment of proteins required for DNA damage signaling and repair. Gamma-H2A is removed from the DNA prior to the strand invasion-primer extension step of the repair process and subsequently dephosphorylated. Dephosphorylation is necessary for efficient recovery from the DNA damage checkpoint. Post-translationally, acetylated by ESA1 to form H2AK4ac and H2AK7ac.

The protein resides in the nucleus. It localises to the chromosome. Core component of nucleosome which plays a central role in DNA double strand break (DSB) repair. Nucleosomes wrap and compact DNA into chromatin, limiting DNA accessibility to the cellular machineries which require DNA as a template. Histones thereby play a central role in transcription regulation, DNA repair, DNA replication and chromosomal stability. DNA accessibility is regulated via a complex set of post-translational modifications of histones, also called histone code, and nucleosome remodeling. This is Histone H2A.1 (HTA1) from Candida albicans (strain SC5314 / ATCC MYA-2876) (Yeast).